Reading from the N-terminus, the 372-residue chain is Adaptive-response sensory-kinase SasA (372 aa).

The Histidine kinase domain occupies 147–360 (MVAHELRTPL…CFHFTVPVWQ (214 aa)). Histidine 150 carries the post-translational modification Phosphohistidine; by autocatalysis.

As to quaternary structure, homooligomerizes. Interacts with KaiC. Participates in the KaiBC complex, whose core is composed of a KaiC homohexamer and 6 KaiB.

It carries out the reaction ATP + protein L-histidine = ADP + protein N-phospho-L-histidine.. Functionally, member of the two-component regulatory system SasA/RpaA involved in genome-wide circadian gene expression. One of several clock output pathways. Participates in the Kai clock protein complex, the main circadian regulator in cyanobacteria, via its interaction with KaiC. KaiC enhances the autophosphorylation activity of SasA, which then transfers its phosphate group to RpaA to activate it. In addition to its output function, recruits fold-shifted KaiB (KaiB(fs)) to KaiC to cooperatively form the KaiB(6):KaiC(6) complex (independent of SasA kinase activity). Required for robustness of the circadian rhythm of gene expression and is involved in clock output, also required for adaptation to light/dark cycles. The sequence is that of Adaptive-response sensory-kinase SasA from Prochlorococcus marinus subsp. pastoris (strain CCMP1986 / NIES-2087 / MED4).